Here is a 779-residue protein sequence, read N- to C-terminus: Cell division control protein 4 (779 aa).

The tract at residues 39 to 80 (AGTHRNSSTAKTVETEDGEEDIDEYQRKRAAGSGESTPERSD) is disordered. The short motif at 82–85 (KRVK) is the Nuclear localization signal element. Ser-104 is modified (phosphoserine). In terms of domain architecture, F-box spans 272-319 (RDLITSLPFEISLKIFNYLQFEDIINSLGVSQNWNKIIRKSTSLWKKL). WD repeat units lie at residues 380 to 408 (HMTS…RVYD), 420 to 449 (GHDG…RVWD), 461 to 493 (GHNS…HVWK), 528 to 556 (GHMA…IVWD), 568 to 598 (GHTD…RIWD), 630 to 658 (GHTA…RGWD), and 669 to 698 (HHTN…NIYN).

In terms of assembly, interacts with DCD53 and SKP1. Component of the SCF(CDC4) complex containing CDC53, SKP1, RBX1 and CDC4. CDC34. Interacts with CDC6 and CIC1. Interacts with SIC1; the interaction involves a SIC1 double phosphorylated motif (degron). Homodimerizes; the dimerization increases SIC1 ubiquitination in vitro.

It localises to the nucleus. The protein operates within protein modification; protein ubiquitination. Substrate recognition component of a SCF (SKP1-CUL1-F-box protein) E3 ubiquitin-protein ligase complex which mediates the ubiquitination and subsequent proteasomal degradation of target proteins. Recognizes and binds to phosphorylated target proteins. Directs ubiquitination of the phosphorylated CDK inhibitor SIC1. Involved in the degradation of CDC6 together with CDC34/UBC3 and CDC53, and in restricting the degradation of FAR1 to the nucleus. Is essential for initiation of DNA replication and separation of the spindle pole bodies to form the poles of the mitotic spindle. It also plays a role in bud development, fusion of zygotic nuclei after conjugation and various aspects of sporulation. Required for HTA1-HTB1 locus transcription activation. Required for G1/S and G2/M transition. In Saccharomyces cerevisiae (strain ATCC 204508 / S288c) (Baker's yeast), this protein is Cell division control protein 4 (CDC4).